We begin with the raw amino-acid sequence, 197 residues long: Guanylate kinase (197 aa).

A Guanylate kinase-like domain is found at 7–185 (GLIIILSSPS…TLKKIHEIIV (179 aa)). 14 to 21 (SPSGTGKS) contacts ATP.

It belongs to the guanylate kinase family.

It is found in the cytoplasm. The enzyme catalyses GMP + ATP = GDP + ADP. Functionally, essential for recycling GMP and indirectly, cGMP. The sequence is that of Guanylate kinase (gmk) from Rickettsia prowazekii (strain Madrid E).